The sequence spans 196 residues: MSSKEQKTPEGQAPEEIIMDQHEEVEAVEPNDSAEQVDPRDEKIANLEVQLAEAQTRERDTVLRIKAEMENLRRRTEQDIEKAHKFALEKFVNELLPVIDSLDRALEVADKANPDMAAMVEGIELTLKSMLDVVRKFGVEVIAETNVPLDPNVHQAIAMVESEEVPAGNVLGIMQKGYTLNGRTIRAAMVTVAKAK.

A disordered region spans residues methionine 1–arginine 40.

This sequence belongs to the GrpE family. As to quaternary structure, homodimer.

Its subcellular location is the cytoplasm. In terms of biological role, participates actively in the response to hyperosmotic and heat shock by preventing the aggregation of stress-denatured proteins, in association with DnaK and GrpE. It is the nucleotide exchange factor for DnaK and may function as a thermosensor. Unfolded proteins bind initially to DnaJ; upon interaction with the DnaJ-bound protein, DnaK hydrolyzes its bound ATP, resulting in the formation of a stable complex. GrpE releases ADP from DnaK; ATP binding to DnaK triggers the release of the substrate protein, thus completing the reaction cycle. Several rounds of ATP-dependent interactions between DnaJ, DnaK and GrpE are required for fully efficient folding. The sequence is that of Protein GrpE from Salmonella enteritidis PT4 (strain P125109).